Reading from the N-terminus, the 1037-residue chain is Tyrosine-protein kinase-like otk (1037 aa).

An N-terminal signal peptide occupies residues 1 to 23 (MDMDVMMISMCILASTFMAPGWA). Ig-like C2-type domains follow at residues 24–109 (STSG…REAS), 110–199 (PPAK…RVMS), 251–365 (PEDL…APLN), 368–464 (PGLL…VSIN), and 469–559 (PKFS…VQLV). Over 24 to 582 (STSGFLRVPQ…GGDGFLVTRA (559 aa)) the chain is Extracellular. Intrachain disulfides connect Cys-47/Cys-96, Cys-138/Cys-188, Cys-276/Cys-354, Cys-399/Cys-448, and Cys-491/Cys-543. N-linked (GlcNAc...) asparagine glycans are attached at residues Asn-336, Asn-418, Asn-430, Asn-445, Asn-513, and Asn-525. Residues 583–603 (VLITMTVALAYIVLVVGLMLW) traverse the membrane as a helical segment. Residues 604–1037 (CRYRRQARKA…SKAMQSVAEK (434 aa)) lie on the Cytoplasmic side of the membrane. 2 disordered regions span residues 623-683 (AGGD…KSVY) and 720-777 (SAQS…KEEE). Polar residues predominate over residues 658 to 676 (KSNGDAQKSDDTACSQQSR). Position 681 is a phosphoserine (Ser-681). The Protein kinase; inactive domain maps to 693 to 1031 (LSELLQIGRG…QLGSALSKAM (339 aa)). Positions 723 to 734 (SDKDADTEKQHS) are enriched in basic and acidic residues. A compositionally biased stretch (gly residues) spans 739 to 749 (GSGGSGSGSGS). A compositionally biased stretch (acidic residues) spans 768–777 (DDIEEIKEEE).

The protein belongs to the protein kinase superfamily. Tyr protein kinase family. Insulin receptor subfamily. As to quaternary structure, interacts with plexA; component of a receptor complex that mediates the repulsive signaling in response to Semaphorin ligands.

Its subcellular location is the cell membrane. Its function is as follows. Acts as a calcium-dependent, homophilic cell adhesion molecule that regulates neural recognition during the development of the nervous system. Component of the repulsive Plexin signaling response to regulate motor axon guidance at the embryonic stage. Also component of a receptor complex that is required in the adult visual system to innervate the lamina layer; specific targeting of R1-R6 axons. In Drosophila pseudoobscura pseudoobscura (Fruit fly), this protein is Tyrosine-protein kinase-like otk.